The chain runs to 356 residues: Histidinol-phosphate aminotransferase (356 aa).

Residue lysine 210 is modified to N6-(pyridoxal phosphate)lysine.

The protein belongs to the class-II pyridoxal-phosphate-dependent aminotransferase family. Histidinol-phosphate aminotransferase subfamily. Homodimer. Pyridoxal 5'-phosphate serves as cofactor.

It carries out the reaction L-histidinol phosphate + 2-oxoglutarate = 3-(imidazol-4-yl)-2-oxopropyl phosphate + L-glutamate. It participates in amino-acid biosynthesis; L-histidine biosynthesis; L-histidine from 5-phospho-alpha-D-ribose 1-diphosphate: step 7/9. In Gluconacetobacter diazotrophicus (strain ATCC 49037 / DSM 5601 / CCUG 37298 / CIP 103539 / LMG 7603 / PAl5), this protein is Histidinol-phosphate aminotransferase.